A 442-amino-acid polypeptide reads, in one-letter code: Protein PhoH2 (442 aa).

Positions 3-135 (KIYVLDTNVL…LVSKDVLVRV (133 aa)) constitute a PINc domain. 259–266 (GKAGTGKT) contacts ATP.

It in the N-terminal section; belongs to the PINc/VapC protein family. This sequence in the C-terminal section; belongs to the PhoH family.

It carries out the reaction n ATP + n H2O + wound RNA = n ADP + n phosphate + unwound RNA.. The catalysed reaction is ATP + H2O = ADP + phosphate + H(+). The enzyme catalyses GTP + H2O = GDP + phosphate + H(+). In terms of biological role, unwinds and/or cleaves 5'-tailed RNA in vitro. Has ATPase and GTPase activities. Unlike the protein in mycobacteria there does not seem to be an antitoxin gene upstream, suggesting this is not a toxin-antitoxin system. The chain is Protein PhoH2 from Bacillus subtilis (strain 168).